The primary structure comprises 382 residues: ATP phosphoribosyltransferase regulatory subunit (382 aa).

The protein belongs to the class-II aminoacyl-tRNA synthetase family. HisZ subfamily. Heteromultimer composed of HisG and HisZ subunits.

The protein localises to the cytoplasm. It participates in amino-acid biosynthesis; L-histidine biosynthesis; L-histidine from 5-phospho-alpha-D-ribose 1-diphosphate: step 1/9. Required for the first step of histidine biosynthesis. May allow the feedback regulation of ATP phosphoribosyltransferase activity by histidine. In Burkholderia ambifaria (strain ATCC BAA-244 / DSM 16087 / CCUG 44356 / LMG 19182 / AMMD) (Burkholderia cepacia (strain AMMD)), this protein is ATP phosphoribosyltransferase regulatory subunit.